A 121-amino-acid polypeptide reads, in one-letter code: Large ribosomal subunit protein uL18 (121 aa).

It belongs to the universal ribosomal protein uL18 family. Part of the 50S ribosomal subunit; part of the 5S rRNA/L5/L18/L25 subcomplex. Contacts the 5S and 23S rRNAs.

This is one of the proteins that bind and probably mediate the attachment of the 5S RNA into the large ribosomal subunit, where it forms part of the central protuberance. This is Large ribosomal subunit protein uL18 from Mesomycoplasma hyopneumoniae (strain J / ATCC 25934 / NCTC 10110) (Mycoplasma hyopneumoniae).